We begin with the raw amino-acid sequence, 130 residues long: Small ribosomal subunit protein uS11 (130 aa).

This sequence belongs to the universal ribosomal protein uS11 family. As to quaternary structure, part of the 30S ribosomal subunit. Interacts with proteins S7 and S18. Binds to IF-3.

In terms of biological role, located on the platform of the 30S subunit, it bridges several disparate RNA helices of the 16S rRNA. Forms part of the Shine-Dalgarno cleft in the 70S ribosome. In Syntrophus aciditrophicus (strain SB), this protein is Small ribosomal subunit protein uS11.